The following is a 369-amino-acid chain: DNA replication and repair protein RecF (369 aa).

30-37 is an ATP binding site; the sequence is GINAQGKT.

Belongs to the RecF family.

It is found in the cytoplasm. Its function is as follows. The RecF protein is involved in DNA metabolism; it is required for DNA replication and normal SOS inducibility. RecF binds preferentially to single-stranded, linear DNA. It also seems to bind ATP. This chain is DNA replication and repair protein RecF, found in Macrococcus caseolyticus (strain JCSC5402) (Macrococcoides caseolyticum).